The chain runs to 106 residues: Iron-sulfur cluster assembly protein CyaY (106 aa).

The protein belongs to the frataxin family.

Its function is as follows. Involved in iron-sulfur (Fe-S) cluster assembly. May act as a regulator of Fe-S biogenesis. In Escherichia coli O7:K1 (strain IAI39 / ExPEC), this protein is Iron-sulfur cluster assembly protein CyaY.